The primary structure comprises 123 residues: Large ribosomal subunit protein uL14 (123 aa).

This sequence belongs to the universal ribosomal protein uL14 family. In terms of assembly, part of the 50S ribosomal subunit. Forms a cluster with proteins L3 and L19. In the 70S ribosome, L14 and L19 interact and together make contacts with the 16S rRNA in bridges B5 and B8.

In terms of biological role, binds to 23S rRNA. Forms part of two intersubunit bridges in the 70S ribosome. The polypeptide is Large ribosomal subunit protein uL14 (Koribacter versatilis (strain Ellin345)).